Here is a 223-residue protein sequence, read N- to C-terminus: Putative NAD(P)H nitroreductase SAUSA300_2462 (223 aa).

Belongs to the nitroreductase family. FMN is required as a cofactor.

This Staphylococcus aureus (strain USA300) protein is Putative NAD(P)H nitroreductase SAUSA300_2462.